The chain runs to 291 residues: 33 kDa chaperonin (291 aa).

2 disulfides stabilise this stretch: Cys237–Cys239 and Cys270–Cys273.

It belongs to the HSP33 family. Post-translationally, under oxidizing conditions two disulfide bonds are formed involving the reactive cysteines. Under reducing conditions zinc is bound to the reactive cysteines and the protein is inactive.

It is found in the cytoplasm. Its function is as follows. Redox regulated molecular chaperone. Protects both thermally unfolding and oxidatively damaged proteins from irreversible aggregation. Plays an important role in the bacterial defense system toward oxidative stress. This chain is 33 kDa chaperonin, found in Bacillus anthracis (strain A0248).